Here is a 420-residue protein sequence, read N- to C-terminus: Tyrosine--tRNA ligase 2 (420 aa).

Tyr-34 contributes to the L-tyrosine binding site. The short motif at 39–48 (PTGDSMHIGH) is the 'HIGH' region element. Positions 168 and 172 each coordinate L-tyrosine. The 'KMSKS' region motif lies at 230 to 234 (KFGKS). Residue Lys-233 coordinates ATP. One can recognise an S4 RNA-binding domain in the interval 352–418 (KNIVEWLVDL…GKKNYSLVKL (67 aa)).

It belongs to the class-I aminoacyl-tRNA synthetase family. TyrS type 1 subfamily. Homodimer.

It is found in the cytoplasm. The catalysed reaction is tRNA(Tyr) + L-tyrosine + ATP = L-tyrosyl-tRNA(Tyr) + AMP + diphosphate + H(+). Its function is as follows. Catalyzes the attachment of tyrosine to tRNA(Tyr) in a two-step reaction: tyrosine is first activated by ATP to form Tyr-AMP and then transferred to the acceptor end of tRNA(Tyr). The protein is Tyrosine--tRNA ligase 2 of Bacillus cereus (strain ATCC 14579 / DSM 31 / CCUG 7414 / JCM 2152 / NBRC 15305 / NCIMB 9373 / NCTC 2599 / NRRL B-3711).